Here is a 300-residue protein sequence, read N- to C-terminus: MKEDRIVFIFGPTAVGKSNILFHFPRNKAEIINVDSIQVYKEFNIASSKPGKSLMKHIKHHLVDFLEPEKEYTLGIFYEQALKIVKEIRQKKKIPIFVGGTAFYFKHLKDGFPSTPLVTSKIRIYVNNLLDLKGKSHLLKELKNVDPIRFNMLNKNDIYRIKRSLEVYYQTGIPISQFQKKQNSEFKNILIVGLKRSFEDLKTRISIRINEMLNSGLLSEIKGLFSKGYNENTPAFKGIGYNEFLLWKSRPWYSLNDIISLINKNSVLYAKRQMTFFAKMPDVLWFHPEDDLDDILNLIF.

11–18 lines the ATP pocket; that stretch reads GPTAVGKS. 13-18 contributes to the substrate binding site; sequence TAVGKS. Residues 35–38 form an interaction with substrate tRNA region; it reads DSIQ.

This sequence belongs to the IPP transferase family. Monomer. It depends on Mg(2+) as a cofactor.

It carries out the reaction adenosine(37) in tRNA + dimethylallyl diphosphate = N(6)-dimethylallyladenosine(37) in tRNA + diphosphate. Its function is as follows. Catalyzes the transfer of a dimethylallyl group onto the adenine at position 37 in tRNAs that read codons beginning with uridine, leading to the formation of N6-(dimethylallyl)adenosine (i(6)A). The polypeptide is tRNA dimethylallyltransferase (Borreliella afzelii (strain PKo) (Borrelia afzelii)).